The sequence spans 161 residues: Transcription elongation factor GreA (161 aa).

Belongs to the GreA/GreB family.

Functionally, necessary for efficient RNA polymerase transcription elongation past template-encoded arresting sites. The arresting sites in DNA have the property of trapping a certain fraction of elongating RNA polymerases that pass through, resulting in locked ternary complexes. Cleavage of the nascent transcript by cleavage factors such as GreA or GreB allows the resumption of elongation from the new 3'terminus. GreA releases sequences of 2 to 3 nucleotides. The chain is Transcription elongation factor GreA from Desulfotalea psychrophila (strain LSv54 / DSM 12343).